Here is a 308-residue protein sequence, read N- to C-terminus: MKIILLFLAALASFTVHAQPPSQTVEQTVRHIYQNYKSDATAPYFGETGERAITSARIQQALTLNDNLTLPGNIGWLDYDPVCDCQDFGDLVLESVAITQTDADHADAVVRFRIFKDDKEKTTQTLKMVAENGRWVIDDIVSNHGSVLQAVNSENEKTLAALASLQKEQPEAFVAELFEHIADYSWPWTWVVSDSYRQAVNAFYKTTFKTANNPDEDMQIERQFIYDNPICFGEESLFSRVDEIRVLEKTADSARIHVRFTLTNGNNEEQELVLQRREGKWEIADFIRPNSGSLLKQIEAKTAARLKQ.

The signal sequence occupies residues Met-1 to Ala-18.

This is an uncharacterized protein from Escherichia coli (strain K12).